Consider the following 246-residue polypeptide: Endonuclease NucS (246 aa).

This sequence belongs to the NucS endonuclease family.

The protein resides in the cytoplasm. Cleaves both 3' and 5' ssDNA extremities of branched DNA structures. In Corynebacterium urealyticum (strain ATCC 43042 / DSM 7109), this protein is Endonuclease NucS.